The primary structure comprises 311 residues: MSISGKLLTEDNQLISPVATVYDYIALLKPRVMSLVVFTALVGLVVSPVVVDPLYGFVAILCIAIGGGGAGALNMWYEADIDALMKRTQKRPIPSGKISRGKALIFSSILSVLSVFLMGVLINWFSALFLAFTIFFYIVIYTIWLKRITPQNIVIGGAAGAFPPMIGWAAATGTISLDSFLLFLIIFMWTPPHFWSLCLFSSSDYEAAGIPMMPNVRGERSTKNQILVYAIITAVCAIGPYITGYAGIIYGISSTILGGMFVYFAYRLWKTDTHDETVPIAKKTFFFSLFYLGAIFGILLIEFLIWHFIIR.

The next 9 helical transmembrane spans lie at 32–52, 53–73, 98–118, 120–140, 153–173, 180–200, 226–246, 248–268, and 285–305; these read VMSL…VVVD, PLYG…AGAL, ISRG…VFLM, VLIN…YIVI, IVIG…AATG, FLLF…LCLF, ILVY…TGYA, IIYG…AYRL, and FFFS…EFLI.

It belongs to the UbiA prenyltransferase family. Protoheme IX farnesyltransferase subfamily.

It localises to the cell inner membrane. It carries out the reaction heme b + (2E,6E)-farnesyl diphosphate + H2O = Fe(II)-heme o + diphosphate. It participates in porphyrin-containing compound metabolism; heme O biosynthesis; heme O from protoheme: step 1/1. Converts heme B (protoheme IX) to heme O by substitution of the vinyl group on carbon 2 of heme B porphyrin ring with a hydroxyethyl farnesyl side group. The polypeptide is Protoheme IX farnesyltransferase (Bartonella bacilliformis (strain ATCC 35685 / KC583 / Herrer 020/F12,63)).